A 391-amino-acid polypeptide reads, in one-letter code: Probable sugar efflux transporter (391 aa).

The next 12 membrane-spanning stretches (helical) occupy residues 16–36 (VFVFSLSAFIFNTTEFVPVAL), 51–71 (VGLMITAYAWVVSLGSLPLML), 82–102 (LLFLFALFIASHILSALAWNF), 103–123 (WVLLISRIGIAFAHSIFWSIT), 138–158 (QALGLLALGSSLAMILGLPLG), 171–191 (FGVIGGVATLIALLMWKLLPP), 210–230 (PLLMGIYLLVIMVISGHFTTY), 247–267 (ITTLMLFVFGLAGVAGSFLFG), 277–297 (FIAFAMILVICPQLLLFVFKN), 300–320 (WVIFLQIFLWGIGITSLTIAL), 338–358 (IFSGSYNVGIGSGALFGSIVI), and 361–381 (LGLGYIGFVGGALGLLALFWL).

The protein belongs to the major facilitator superfamily. SotB (TC 2.A.1.2) family.

Its subcellular location is the cell inner membrane. Its function is as follows. Involved in the efflux of sugars. The physiological role may be the reduction of the intracellular concentration of toxic sugars or sugar metabolites. The polypeptide is Probable sugar efflux transporter (Helicobacter pylori (strain G27)).